The sequence spans 90 residues: Large ribosomal subunit protein bL31 (90 aa).

The disordered stretch occupies residues 71-90; sequence KVKKFPSNADNQKEPAEEQE. Positions 81-90 are enriched in basic and acidic residues; the sequence is NQKEPAEEQE.

The protein belongs to the bacterial ribosomal protein bL31 family. Type A subfamily. As to quaternary structure, part of the 50S ribosomal subunit.

In terms of biological role, binds the 23S rRNA. This is Large ribosomal subunit protein bL31 (rpmE) from Aster yellows witches'-broom phytoplasma (strain AYWB).